The sequence spans 318 residues: 4-hydroxy-3-methylbut-2-enyl diphosphate reductase (318 aa).

[4Fe-4S] cluster is bound at residue C12. Residues H41 and H74 each coordinate (2E)-4-hydroxy-3-methylbut-2-enyl diphosphate. Dimethylallyl diphosphate is bound by residues H41 and H74. Isopentenyl diphosphate-binding residues include H41 and H74. [4Fe-4S] cluster is bound at residue C96. H124 provides a ligand contact to (2E)-4-hydroxy-3-methylbut-2-enyl diphosphate. A dimethylallyl diphosphate-binding site is contributed by H124. H124 contacts isopentenyl diphosphate. E126 serves as the catalytic Proton donor. T168 is a binding site for (2E)-4-hydroxy-3-methylbut-2-enyl diphosphate. Residue C198 coordinates [4Fe-4S] cluster. (2E)-4-hydroxy-3-methylbut-2-enyl diphosphate-binding residues include S226, S227, N228, and S270. Dimethylallyl diphosphate-binding residues include S226, S227, N228, and S270. Residues S226, S227, N228, and S270 each coordinate isopentenyl diphosphate.

Belongs to the IspH family. The cofactor is [4Fe-4S] cluster.

The catalysed reaction is isopentenyl diphosphate + 2 oxidized [2Fe-2S]-[ferredoxin] + H2O = (2E)-4-hydroxy-3-methylbut-2-enyl diphosphate + 2 reduced [2Fe-2S]-[ferredoxin] + 2 H(+). It carries out the reaction dimethylallyl diphosphate + 2 oxidized [2Fe-2S]-[ferredoxin] + H2O = (2E)-4-hydroxy-3-methylbut-2-enyl diphosphate + 2 reduced [2Fe-2S]-[ferredoxin] + 2 H(+). The protein operates within isoprenoid biosynthesis; dimethylallyl diphosphate biosynthesis; dimethylallyl diphosphate from (2E)-4-hydroxy-3-methylbutenyl diphosphate: step 1/1. Its pathway is isoprenoid biosynthesis; isopentenyl diphosphate biosynthesis via DXP pathway; isopentenyl diphosphate from 1-deoxy-D-xylulose 5-phosphate: step 6/6. Functionally, catalyzes the conversion of 1-hydroxy-2-methyl-2-(E)-butenyl 4-diphosphate (HMBPP) into a mixture of isopentenyl diphosphate (IPP) and dimethylallyl diphosphate (DMAPP). Acts in the terminal step of the DOXP/MEP pathway for isoprenoid precursor biosynthesis. In Psychrobacter arcticus (strain DSM 17307 / VKM B-2377 / 273-4), this protein is 4-hydroxy-3-methylbut-2-enyl diphosphate reductase.